The primary structure comprises 400 residues: Putative niacin/nicotinamide transporter NiaP (400 aa).

Over 1 to 14 the chain is Cytoplasmic; it reads MGKQQPISQRKLLG. The chain crosses the membrane as a helical span at residues 15 to 35; sequence VAGLGWLFDAMDVGILSFIIA. The Extracellular portion of the chain corresponds to 36–49; it reads ALHVEWNLSPEEMK. Residues 50-70 form a helical membrane-spanning segment; sequence WIGSVNSIGMAAGAFLFGLLA. At 71 to 77 the chain is on the cytoplasmic side; the sequence is DRIGRKK. 2 consecutive transmembrane segments (helical) span residues 78 to 98 and 99 to 119; these read VFII…FVTS and LSAF…ELPV. Residues 120–142 lie on the Cytoplasmic side of the membrane; that stretch reads ASTLVSEAVVPEKRGRVIVLLES. The helical transmembrane segment at 143 to 163 threads the bilayer; the sequence is FWAVGWLAAALISYFVIPSFG. At 164–165 the chain is on the extracellular side; the sequence is WQ. Residues 166–186 form a helical membrane-spanning segment; it reads AALLLTALTAFYALYLRTSLP. The Cytoplasmic segment spans residues 187 to 217; that stretch reads DSPKYESLSAKKRSMWENVKSVWARQYIRPT. The helical transmembrane segment at 218 to 238 threads the bilayer; sequence VMLSIVWFCVVFSYYGMFLWL. Residues 239 to 253 lie on the Extracellular side of the membrane; sequence PSVMLLKGFSMIQSF. The chain crosses the membrane as a helical span at residues 254-274; sequence EYVLLMTLAQLPGYFSAAWLI. Residues 275-280 are Cytoplasmic-facing; sequence EKAGRK. The helical transmembrane segment at 281–301 threads the bilayer; that stretch reads WILVVYLIGTAGSAYFFGTAD. The Extracellular segment spans residues 302–304; that stretch reads SLS. The chain crosses the membrane as a helical span at residues 305 to 325; that stretch reads LLLTAGVLLSFFNLGAWGVLY. At 326-343 the chain is on the cytoplasmic side; it reads AYTPEQYPTAIRATGSGT. Residues 344–364 traverse the membrane as a helical segment; that stretch reads TAAFGRIGGIFGPLLVGTLAA. The Extracellular portion of the chain corresponds to 365 to 370; sequence RHISFS. The chain crosses the membrane as a helical span at residues 371–391; sequence VIFSIFCIAILLAVACILIMG. The Cytoplasmic portion of the chain corresponds to 392-400; that stretch reads KETKQTELE.

Belongs to the major facilitator superfamily. Sugar transporter (TC 2.A.1.1) family.

Its subcellular location is the cell membrane. Functionally, probably involved in the uptake of amidated and deamidated forms of niacin. Increases the growth rate of E.coli that is unable to make niacin de novo; confers increased sensitivity to the toxic niacin analog 6-amino-nicotinamide to wild-type E.coli. There is probably another mechanism for niacin uptake. This is Putative niacin/nicotinamide transporter NiaP from Bacillus subtilis (strain 168).